Reading from the N-terminus, the 138-residue chain is Acidic phospholipase A2 AplTX-I (138 aa).

The signal sequence occupies residues 1-16; sequence MRTLWIMAVLLLGVEG. Disulfide bonds link Cys-42–Cys-131, Cys-44–Cys-60, Cys-59–Cys-111, Cys-65–Cys-138, Cys-66–Cys-104, Cys-73–Cys-97, and Cys-91–Cys-102. Residues Tyr-43, Gly-45, and Gly-47 each coordinate Ca(2+). Residue His-63 is part of the active site. Asp-64 serves as a coordination point for Ca(2+). Asp-105 is an active-site residue.

Monomer. It depends on Ca(2+) as a cofactor. As to expression, expressed by the venom gland.

It is found in the secreted. It catalyses the reaction a 1,2-diacyl-sn-glycero-3-phosphocholine + H2O = a 1-acyl-sn-glycero-3-phosphocholine + a fatty acid + H(+). Inhibited by divalent cations different from calcium ions (cadmium, magnesium, manganese, zinc), since they act as competitive antagonists of this cofactor. In terms of biological role, snake venom phospholipase A2 (PLA2) that triggers a high neuromuscular toxicity in chick biventer cervicis preparations, but not in mouse phrenic nerve-diaphragm (PND) preparations, suggesting a selective neurotoxin activity towards birds. Does not induce myotoxic, coagulant, anticoagulant, edema, and antibacterial activities. PLA2 catalyzes the calcium-dependent hydrolysis of the 2-acyl groups in 3-sn-phosphoglycerides. The chain is Acidic phospholipase A2 AplTX-I from Agkistrodon piscivorus leucostoma (Western cottonmouth).